We begin with the raw amino-acid sequence, 22 residues long: Antimicrobial peptide 5 (22 aa).

Leu22 bears the Leucine amide mark.

Skin.

It localises to the secreted. Functionally, has very strong antimicrobial activity against Gram-positive bacterium S.aureus, Gram-negative bacterium E.coli and yeast C.albicans. Has strong hemolytic activity against human red blood cells. The protein is Antimicrobial peptide 5 of Xenopus tropicalis (Western clawed frog).